A 641-amino-acid polypeptide reads, in one-letter code: METKYLDLLAQKYDCEEKVVTEIINLKAILNLPKGTEHFVSDLHGEYQAFQHVLRNGSGRVKEKIRDIFSGVIYDREIDELAALVYYPEDKLKLIKHDFDTKEALNEWYKETIHRMIKLVSYCSSKYTRSKLRKALPAQFAYISEELLYKTEQAANKEQYYSEIIEQIIALGQADKLITGLAYSTQRLVVDHLHVVGDIYDRGPQPDKIMEELINYHSVDIQWGNHDVLWIGAYSGSKVCLANIIRICARYDNLDIIEDVYGINLRPLLNLAEKYYDDNPSFRPKADENRPEDEIKQITKIHQAIAMIQFKLESPIIKRRPNFNMEERLLLEKIDYDRNEITLNGKTYQLENTCFATVNPKQPDELLEEEAEVMDKLLFSVQNSEKLGRHMNFMMKKGSLYLKYNGNLLIHGCIPVDENGSMETMMIEDKAYAGRELLDVFERFLREAFAHPEETDDLATDMTWYLWTGEYSSLFGKRAMTTFERYFIKEKETHKEKKNPYYYLREDEAACRNILMEFGLNPDHGHIINGHTPVKEIEGEDPIKANGKMIVIDGGFSKAYQSTTGIAGYTLLYNSYGMQLVAHKHFNSKAEVLSTGTDVLTVKRLVDKELERKKVKETNVGEELMKEVAILEKLREYRYMK.

Belongs to the FBPase class 3 family. Mn(2+) serves as cofactor.

The enzyme catalyses beta-D-fructose 1,6-bisphosphate + H2O = beta-D-fructose 6-phosphate + phosphate. It functions in the pathway carbohydrate biosynthesis; gluconeogenesis. The polypeptide is Fructose-1,6-bisphosphatase class 3 (Bacillus velezensis (strain DSM 23117 / BGSC 10A6 / LMG 26770 / FZB42) (Bacillus amyloliquefaciens subsp. plantarum)).